The sequence spans 68 residues: Protein transport protein Sec61 subunit gamma (68 aa).

At 1-32 (MDQFQALIEPARQFSKDSYRLVKRCTKPDRKE) the chain is on the cytoplasmic side. The chain crosses the membrane as a helical span at residues 33-61 (YQKIAMATAIGFAIMGFIGFFVKLIHIPI). Residues 62–68 (NNIIVGA) lie on the Extracellular side of the membrane.

This sequence belongs to the SecE/SEC61-gamma family. As to quaternary structure, heterotrimeric complex composed of SEC61-alpha, SEC61-beta and SEC61-gamma. As to expression, expressed in the germline. Expression in the germline is regulated in a sex- and meiotic cycle stage-specific manner. Expressed in somatic tissues including the intestine and somatic gonad. Expressed in the intestine more highly in hermaprodites than in males. In hermaphrodites, weakly expressed in the spermatheca.

The protein localises to the endoplasmic reticulum membrane. In terms of biological role, required for oocyte development and ovulation. Required for the translocation of secretory and transmembrane proteins into the endoplasmic reticulum in vitro. The chain is Protein transport protein Sec61 subunit gamma from Caenorhabditis elegans.